We begin with the raw amino-acid sequence, 429 residues long: MSSRKVSRAHYDEDELASAANMSLVAEGHFRGMKELLSTMDLDTDANTIPELKERAHMLCARFLGGAWKTVPLEHLRISRIKGGMSNMLFLCRLSEVYPPIRNEPNKVLLRVYFNPETESHLVAESVIFTLLSERHLGPKLYGIFSGGRLEEYIPSRPLSCHEISLAHMSTKIAKRVAKVHQLEVPIWKEPDYLCEALQRWLKQLTGTVDAEHRFDLPEECGVSSVNCLDLARELEFLRAHISLSKSPVTFCHNDLQEGNILLPKASSGNIRMPSLSDETQALGNSLSAFNPADPRLVLIDFEYASYNYRAFDFANHFIEWTIDYDIDEAPFYKIQTENFPENDQMLEFFLNYLREQGNTRENELYKKSEDLVQETLPFVPVSHFFWGVWGLLQVELSPVGFGFADYGRDRLSLYFKHKQLLKNLASHQ.

Residues 82–88 (KGGMSNM), Arg111, 152–158 (EYIPSRP), and Gln257 contribute to the ATP site. 84–86 (GMS) serves as a coordination point for substrate. Glu258 is a binding site for Ca(2+). Asp301 contacts ATP. Ca(2+)-binding residues include Glu320 and Ile323.

This sequence belongs to the choline/ethanolamine kinase family. Homodimer. A small proportion exists as higher oligomers. It depends on Mg(2+) as a cofactor.

The enzyme catalyses choline + ATP = phosphocholine + ADP + H(+). It carries out the reaction ethanolamine + ATP = phosphoethanolamine + ADP + H(+). It functions in the pathway phospholipid metabolism; phosphatidylcholine biosynthesis; phosphocholine from choline: step 1/1. Its pathway is phospholipid metabolism; phosphatidylethanolamine biosynthesis; phosphatidylethanolamine from ethanolamine: step 1/3. With respect to regulation, inhibited by Ca(2+). Mild inhibition by high levels of Mg(2+)(&gt;10 mM). Functionally, catalyzes the first step in phosphatidylcholine biosynthesis. May contribute to phosphatidylethanolamine biosynthesis. Phosphorylates choline and ethanolamine but the activity is much higher with choline. The protein is Choline kinase A2 of Caenorhabditis elegans.